Reading from the N-terminus, the 92-residue chain is Alpha-conotoxin FrXXA (92 aa).

Residues 1-24 (MPKLEMMLLVLLILPLSYFDSAGG) form the signal peptide. Residues 25 to 45 (QAVKVDGHGDGMDRYLQRDDR) constitute a propeptide that is removed on maturation. Intrachain disulfides connect C63–C72, C68–C80, C73–C90, and C78–C92.

It belongs to the conotoxin D superfamily. As to quaternary structure, homodimer; disulfide-linked. In terms of processing, the homodimer contains 10 disulfide bonds. As to expression, expressed by the venom duct.

It is found in the secreted. Alpha-conotoxins act on postsynaptic membranes, they bind to the nicotinic acetylcholine receptors (nAChR) and thus inhibit them. Through its two C-terminal domains, this homodimeric protein would bind to two nAChR allosteric sites, located outside the nAChR C-loop of the principal binding face and at the adjacent binding interface in a clockwise direction. This toxin blocks both neuronal and muscular subtypes: human alpha-7/CHRNA7, human alpha-3-beta-2 (CHRNA3-CHRNB2), human alpha-4-beta-2 (CHRNA4-CHRNB2), mouse adult muscular subtype alpha-1-beta-1-delta-epsilon (CHRNA1-CHRNB1-CHRND-CHRNE), and mouse fetal muscular subtype alpha-1-beta-1-gamma-delta (CHRNA1-CHRNB1-CHRNG-CHRND). Shows different dissociation rates towards the different subtypes, with a very slow rate towards alpha-7 subtype (almost irreversible), followed by the adult muscular subtype, the fetal muscular subtype, alpha-3-beta-2 and alpha-4-beta-2 (almost entirely reversible within a few minutes of washing). This Conus fergusoni (Ferguson's cone) protein is Alpha-conotoxin FrXXA.